The chain runs to 435 residues: MAALMYNVSRGLVMLGERSLFQRERYQILVNSRRFLRGLRRRPVAVLYPDGERETLIKSKRATDITSQGFTQKGKARKDVTERAAYKNCSGFVSERAEESSQINKLKLAGLRFEKAPAGDNRLARVSSVARSRAFRDKEGKVLLEGRRLICDALSAGASPQMIFFSLLERLQELPLDKLQQAKLIKVKYEDIKLWSDLVTPQGLIAIFSKPDASRLTFPKDARLQSVPLFLICDNVRDAGNLGTILRCAAAAGGDRVLLSKGCVDAWEPKVLRSAMGAHFRLPVFPNLDWDDISKHLPKNVIVHVADNYSTSTKQLVSGQTENVSSDDYSESDSDDDDDEEEDEDSLPHVKPQVYHECWAQRSAALVIGGETHGLSVEALRLAEETDGKRLFVPMAPGVESLNSAMAAGILLFEGRRQLLMLSDKLRRRARTKML.

The transit peptide at 1–42 (MAALMYNVSRGLVMLGERSLFQRERYQILVNSRRFLRGLRRR) directs the protein to the mitochondrion. The segment covering 314 to 324 (KQLVSGQTENV) has biased composition (polar residues). The tract at residues 314 to 351 (KQLVSGQTENVSSDDYSESDSDDDDDEEEDEDSLPHVK) is disordered. The segment covering 328–345 (DYSESDSDDDDDEEEDED) has biased composition (acidic residues). Residues Gly-369 and Leu-402 each coordinate S-adenosyl-L-methionine.

Belongs to the class IV-like SAM-binding methyltransferase superfamily. RNA methyltransferase TrmH family.

The protein localises to the mitochondrion. It catalyses the reaction a uridine in rRNA + S-adenosyl-L-methionine = a 2'-O-methyluridine in rRNA + S-adenosyl-L-homocysteine + H(+). Its function is as follows. S-adenosyl-L-methionine-dependent 2'-O-ribose methyltransferase that catalyzes the formation of 2'-O-methylguanosine at position 1485 (Gm1485) in the mitochondrial large subunit ribosomal RNA (mtLSU rRNA), a conserved modification in the peptidyl transferase domain of the mtLSU rRNA. Also required for formation of 2'-O-methyluridine at position 1484 (Um1484) mediated by MRM2. The protein is rRNA methyltransferase 3A, mitochondrial (mrm3a) of Danio rerio (Zebrafish).